We begin with the raw amino-acid sequence, 224 residues long: Orotate phosphoribosyltransferase (224 aa).

Lysine 29 is a 5-phospho-alpha-D-ribose 1-diphosphate binding site. 37–38 (FF) serves as a coordination point for orotate. 5-phospho-alpha-D-ribose 1-diphosphate is bound by residues 75 to 76 (YK), arginine 105, lysine 106, lysine 109, histidine 111, and 130 to 138 (DDVITAGTS). Residues threonine 134 and arginine 162 each coordinate orotate.

The protein belongs to the purine/pyrimidine phosphoribosyltransferase family. PyrE subfamily. In terms of assembly, homodimer. Mg(2+) serves as cofactor.

The catalysed reaction is orotidine 5'-phosphate + diphosphate = orotate + 5-phospho-alpha-D-ribose 1-diphosphate. It participates in pyrimidine metabolism; UMP biosynthesis via de novo pathway; UMP from orotate: step 1/2. Functionally, catalyzes the transfer of a ribosyl phosphate group from 5-phosphoribose 1-diphosphate to orotate, leading to the formation of orotidine monophosphate (OMP). This Bordetella parapertussis (strain 12822 / ATCC BAA-587 / NCTC 13253) protein is Orotate phosphoribosyltransferase.